The chain runs to 338 residues: Ketol-acid reductoisomerase (NADP(+)) (338 aa).

In terms of domain architecture, KARI N-terminal Rossmann spans 1-181 (MKVFYDKDAD…GGGRAGIIET (181 aa)). Residues 24–27 (YGSQ), Arg-47, and Ser-52 each bind NADP(+). His-107 is a catalytic residue. Residue Gly-133 participates in NADP(+) binding. The KARI C-terminal knotted domain occupies 182–327 (NFREETETDL…AKLRSMMPWI (146 aa)). Residues Asp-190, Glu-194, Glu-226, and Glu-230 each coordinate Mg(2+). Ser-251 provides a ligand contact to substrate.

Belongs to the ketol-acid reductoisomerase family. Requires Mg(2+) as cofactor.

The catalysed reaction is (2R)-2,3-dihydroxy-3-methylbutanoate + NADP(+) = (2S)-2-acetolactate + NADPH + H(+). It catalyses the reaction (2R,3R)-2,3-dihydroxy-3-methylpentanoate + NADP(+) = (S)-2-ethyl-2-hydroxy-3-oxobutanoate + NADPH + H(+). Its pathway is amino-acid biosynthesis; L-isoleucine biosynthesis; L-isoleucine from 2-oxobutanoate: step 2/4. It functions in the pathway amino-acid biosynthesis; L-valine biosynthesis; L-valine from pyruvate: step 2/4. Functionally, involved in the biosynthesis of branched-chain amino acids (BCAA). Catalyzes an alkyl-migration followed by a ketol-acid reduction of (S)-2-acetolactate (S2AL) to yield (R)-2,3-dihydroxy-isovalerate. In the isomerase reaction, S2AL is rearranged via a Mg-dependent methyl migration to produce 3-hydroxy-3-methyl-2-ketobutyrate (HMKB). In the reductase reaction, this 2-ketoacid undergoes a metal-dependent reduction by NADPH to yield (R)-2,3-dihydroxy-isovalerate. This Paraburkholderia phytofirmans (strain DSM 17436 / LMG 22146 / PsJN) (Burkholderia phytofirmans) protein is Ketol-acid reductoisomerase (NADP(+)).